The chain runs to 752 residues: Polyribonucleotide nucleotidyltransferase (752 aa).

Mg(2+) contacts are provided by Asp-529 and Asp-535. Positions 595 to 654 (PRVTTIKVPVDKIGEVIGPKGKVINAITEETGAQISIEDDGTVFVGATDGPSAQAAIDKI) constitute a KH domain. Residues 666-735 (GERFLGTVVK…KRGKISLILV (70 aa)) form the S1 motif domain.

This sequence belongs to the polyribonucleotide nucleotidyltransferase family. Requires Mg(2+) as cofactor.

The protein localises to the cytoplasm. The catalysed reaction is RNA(n+1) + phosphate = RNA(n) + a ribonucleoside 5'-diphosphate. Involved in mRNA degradation. Catalyzes the phosphorolysis of single-stranded polyribonucleotides processively in the 3'- to 5'-direction. This is Polyribonucleotide nucleotidyltransferase from Mycobacterium tuberculosis (strain ATCC 25177 / H37Ra).